The sequence spans 397 residues: Elongation factor Tu (397 aa).

Residues 10–206 (KPHCNIGTIG…TIDEYVPDPE (197 aa)) enclose the tr-type G domain. The interval 19–26 (GHVDHGKT) is G1. 19–26 (GHVDHGKT) is a GTP binding site. T26 provides a ligand contact to Mg(2+). The G2 stretch occupies residues 61–65 (GITIS). The G3 stretch occupies residues 82-85 (DCPG). GTP-binding positions include 82-86 (DCPGH) and 137-140 (NKCD). Positions 137-140 (NKCD) are G4. Positions 175-177 (SAL) are G5.

Belongs to the TRAFAC class translation factor GTPase superfamily. Classic translation factor GTPase family. EF-Tu/EF-1A subfamily. In terms of assembly, monomer.

It localises to the cytoplasm. It carries out the reaction GTP + H2O = GDP + phosphate + H(+). In terms of biological role, GTP hydrolase that promotes the GTP-dependent binding of aminoacyl-tRNA to the A-site of ribosomes during protein biosynthesis. This chain is Elongation factor Tu, found in Lachnospira eligens (strain ATCC 27750 / DSM 3376 / VPI C15-48 / C15-B4) (Eubacterium eligens).